A 126-amino-acid polypeptide reads, in one-letter code: Aspartate 1-decarboxylase 2 (126 aa).

Serine 25 (schiff-base intermediate with substrate; via pyruvic acid) is an active-site residue. Serine 25 carries the pyruvic acid (Ser) modification. Threonine 57 serves as a coordination point for substrate. Tyrosine 58 (proton donor) is an active-site residue. 73–75 is a binding site for substrate; the sequence is GSA.

The protein belongs to the PanD family. As to quaternary structure, heterooctamer of four alpha and four beta subunits. The cofactor is pyruvate. Is synthesized initially as an inactive proenzyme, which is activated by self-cleavage at a specific serine bond to produce a beta-subunit with a hydroxyl group at its C-terminus and an alpha-subunit with a pyruvoyl group at its N-terminus.

The protein localises to the cytoplasm. It carries out the reaction L-aspartate + H(+) = beta-alanine + CO2. The protein operates within cofactor biosynthesis; (R)-pantothenate biosynthesis; beta-alanine from L-aspartate: step 1/1. Catalyzes the pyruvoyl-dependent decarboxylation of aspartate to produce beta-alanine. The protein is Aspartate 1-decarboxylase 2 of Polaromonas sp. (strain JS666 / ATCC BAA-500).